The primary structure comprises 506 residues: Maturase K (506 aa).

The protein belongs to the intron maturase 2 family. MatK subfamily.

Its subcellular location is the plastid. It is found in the chloroplast. Functionally, usually encoded in the trnK tRNA gene intron. Probably assists in splicing its own and other chloroplast group II introns. The protein is Maturase K of Andromeda polifolia (Bog rosemary).